Here is a 438-residue protein sequence, read N- to C-terminus: Methylenetetrahydrofolate--tRNA-(uracil-5-)-methyltransferase TrmFO (438 aa).

7-12 provides a ligand contact to FAD; it reads GAGLAG.

Belongs to the MnmG family. TrmFO subfamily. It depends on FAD as a cofactor.

The protein resides in the cytoplasm. The enzyme catalyses uridine(54) in tRNA + (6R)-5,10-methylene-5,6,7,8-tetrahydrofolate + NADH + H(+) = 5-methyluridine(54) in tRNA + (6S)-5,6,7,8-tetrahydrofolate + NAD(+). It carries out the reaction uridine(54) in tRNA + (6R)-5,10-methylene-5,6,7,8-tetrahydrofolate + NADPH + H(+) = 5-methyluridine(54) in tRNA + (6S)-5,6,7,8-tetrahydrofolate + NADP(+). In terms of biological role, catalyzes the folate-dependent formation of 5-methyl-uridine at position 54 (M-5-U54) in all tRNAs. The protein is Methylenetetrahydrofolate--tRNA-(uracil-5-)-methyltransferase TrmFO of Sulfurihydrogenibium sp. (strain YO3AOP1).